The sequence spans 433 residues: MTDILNYTKSEEIFSAAQELMPGGVSSPVRAFKSVGGQPIVFDRVKGPFAWDIDGNRYIDYIGSWGPAICGHAHPEVITALHEAIEKGTSFGAPCVLENKLAEMVIDAVPSVEMVRFVNSGTEACMAVLRLMRAFTGRDKVIKFDGCYHGHADMFLVKAGSGVATLGLPDSPGVPRTTTANTLTAPYNDLEAVKKLFSENPDAISGVILEPIVGNAGFITPEPGFLEGLRELTTENGSLLVFDEVMTGFRISYGGAQEKFGVTPDLTTLGKVIGGGLPVGAYGGKKEIMSMVAPAGPVYQAGTLSGNPLAMTAGIKTLELLKQEGTYDKLDSLTSRLIEGIIQSAENNGIAINGGSVSAMFGFFLCDGPVRNFNEAKTNDAELFGKLHREMLRRGIYLAPSPFEAGFTSLAHSEEEIDKTIEAFDESFNEIKK.

Lysine 271 carries the N6-(pyridoxal phosphate)lysine modification.

It belongs to the class-III pyridoxal-phosphate-dependent aminotransferase family. HemL subfamily. In terms of assembly, homodimer. It depends on pyridoxal 5'-phosphate as a cofactor.

It is found in the cytoplasm. It catalyses the reaction (S)-4-amino-5-oxopentanoate = 5-aminolevulinate. It functions in the pathway porphyrin-containing compound metabolism; protoporphyrin-IX biosynthesis; 5-aminolevulinate from L-glutamyl-tRNA(Glu): step 2/2. It participates in porphyrin-containing compound metabolism; chlorophyll biosynthesis. The chain is Glutamate-1-semialdehyde 2,1-aminomutase from Prochlorococcus marinus (strain MIT 9301).